The following is a 270-amino-acid chain: MSDLHNESIFITGGGSGLGLALVERFIEEGAQVATLELSAAKVASLRQRFGEHILAVEGNVTCYADYQRALDQILTRSGKLDCFIGNAGIWDHNASLVNTPAETLETGFHELFNVNVLGYLLGAKACAPALIASEGSMIFTLSNAAWYPGGGGPLYTASKHAATGLIRQLAYELAPKVRVNGVGPCGMASDLRGPQALGQSETSIMQSLTPEKIAAILPLQFFPQPADFTGPYVMLASRRNNRALSGVMINADAGLAIRGIRHVAAGLDL.

Residue F10–A34 coordinates NAD(+). S143 is a binding site for substrate. Y156 functions as the Proton acceptor in the catalytic mechanism.

This sequence belongs to the short-chain dehydrogenases/reductases (SDR) family.

It catalyses the reaction 3-(cis-5,6-dihydroxycyclohexa-1,3-dien-1-yl)propanoate + NAD(+) = 3-(2,3-dihydroxyphenyl)propanoate + NADH + H(+). The catalysed reaction is (2E)-3-(cis-5,6-dihydroxycyclohexa-1,3-dien-1-yl)prop-2-enoate + NAD(+) = (2E)-3-(2,3-dihydroxyphenyl)prop-2-enoate + NADH + H(+). It participates in aromatic compound metabolism; 3-phenylpropanoate degradation. Converts 3-phenylpropionate-dihydrodiol (PP-dihydrodiol) and cinnamic acid-dihydrodiol (CI-dihydrodiol) into 3-(2,3-dihydroxylphenyl)propanoic acid (DHPP) and 2,3-dihydroxicinnamic acid (DHCI), respectively. The sequence is that of 3-phenylpropionate-dihydrodiol/cinnamic acid-dihydrodiol dehydrogenase from Escherichia coli (strain SMS-3-5 / SECEC).